The sequence spans 588 residues: Aspartate--tRNA ligase (588 aa).

Glutamate 177 is an L-aspartate binding site. The interval 201–204 is aspartate; that stretch reads QLFK. Arginine 223 serves as a coordination point for L-aspartate. ATP is bound by residues 223–225 and glutamine 232; that span reads RDE. An L-aspartate-binding site is contributed by histidine 451. Glutamate 485 provides a ligand contact to ATP. An L-aspartate-binding site is contributed by arginine 492. Residue 537 to 540 coordinates ATP; sequence GLDR.

It belongs to the class-II aminoacyl-tRNA synthetase family. Type 1 subfamily. In terms of assembly, homodimer.

It localises to the cytoplasm. It catalyses the reaction tRNA(Asp) + L-aspartate + ATP = L-aspartyl-tRNA(Asp) + AMP + diphosphate. Functionally, catalyzes the attachment of L-aspartate to tRNA(Asp) in a two-step reaction: L-aspartate is first activated by ATP to form Asp-AMP and then transferred to the acceptor end of tRNA(Asp). In Staphylococcus aureus (strain MRSA252), this protein is Aspartate--tRNA ligase.